The sequence spans 89 residues: MAMTAAQKAEIVKGFQRAEGDTGSSEVQIALLTARINDLTPHFKANTKDHHSRRGLLKLVSRRRRLLDYLKRTDAEGYRALITRLGLRK.

It belongs to the universal ribosomal protein uS15 family. As to quaternary structure, part of the 30S ribosomal subunit. Forms a bridge to the 50S subunit in the 70S ribosome, contacting the 23S rRNA.

One of the primary rRNA binding proteins, it binds directly to 16S rRNA where it helps nucleate assembly of the platform of the 30S subunit by binding and bridging several RNA helices of the 16S rRNA. Its function is as follows. Forms an intersubunit bridge (bridge B4) with the 23S rRNA of the 50S subunit in the ribosome. The polypeptide is Small ribosomal subunit protein uS15 (Chromobacterium violaceum (strain ATCC 12472 / DSM 30191 / JCM 1249 / CCUG 213 / NBRC 12614 / NCIMB 9131 / NCTC 9757 / MK)).